Consider the following 127-residue polypeptide: Fluoride-specific ion channel FluC (127 aa).

Helical transmembrane passes span 4-24, 36-56, 72-92, and 101-121; these read LLLVAAGGAVGSVARYLVGVG, GTFTVNVVGGFLMGCLASWLA, VGVLGGFTTFSSFSLETALMI, and FTYSAASVLLAIAALFAGLLV. Positions 76 and 79 each coordinate Na(+).

The protein belongs to the fluoride channel Fluc/FEX (TC 1.A.43) family.

It localises to the cell inner membrane. It catalyses the reaction fluoride(in) = fluoride(out). Its activity is regulated as follows. Na(+) is not transported, but it plays an essential structural role and its presence is essential for fluoride channel function. Fluoride-specific ion channel. Important for reducing fluoride concentration in the cell, thus reducing its toxicity. In Caulobacter vibrioides (strain ATCC 19089 / CIP 103742 / CB 15) (Caulobacter crescentus), this protein is Fluoride-specific ion channel FluC.